We begin with the raw amino-acid sequence, 98 residues long: MRGETPTLQDYVLDLQPEATDLHCYEQLPDSSDEEDVIDSPAGQAEPDTSNYNIVTFCCQCKSTLRLCVQSTQVDIRILQELLMGSFGIVCPNCSTRL.

Residues 1–40 (MRGETPTLQDYVLDLQPEATDLHCYEQLPDSSDEEDVIDS) are E7 terminal domain. Positions 22-26 (LHCYE) match the LXCXE motif; interaction with host RB1 and TMEM173/STING motif. Residues 58–94 (CCQCKSTLRLCVQSTQVDIRILQELLMGSFGIVCPNC) fold into a zinc finger. The Nuclear export signal motif lies at 76–84 (IRILQELLM).

It belongs to the papillomaviridae E7 protein family. Homodimer. Homooligomer. Interacts with host RB1; this interaction induces dissociation of RB1-E2F1 complex thereby disrupting RB1 activity. Interacts with host EP300; this interaction represses EP300 transcriptional activity. Interacts with protein E2; this interaction inhibits E7 oncogenic activity. Interacts with host TMEM173/STING; this interaction impairs the ability of TMEM173/STING to sense cytosolic DNA and promote the production of type I interferon (IFN-alpha and IFN-beta). Post-translationally, highly phosphorylated.

The protein localises to the host cytoplasm. It localises to the host nucleus. In terms of biological role, E7 protein has both transforming and trans-activating activities. Disrupts the function of host retinoblastoma protein RB1/pRb, which is a key regulator of the cell cycle. Induces the disassembly of the E2F1 transcription factors from RB1, with subsequent transcriptional activation of E2F1-regulated S-phase genes. Inactivation of the ability of RB1 to arrest the cell cycle is critical for cellular transformation, uncontrolled cellular growth and proliferation induced by viral infection. Stimulation of progression from G1 to S phase allows the virus to efficiently use the cellular DNA replicating machinery to achieve viral genome replication. Interferes with histone deacetylation mediated by HDAC1 and HDAC2, leading to activation of transcription. Functionally, plays a role in viral genome replication by driving entry of quiescent cells into the cell cycle. Stimulation of progression from G1 to S phase allows the virus to efficiently use the cellular DNA replicating machinery to achieve viral genome replication. E7 protein has both transforming and trans-activating activities. Induces the disassembly of the E2F1 transcription factor from RB1, with subsequent transcriptional activation of E2F1-regulated S-phase genes. Interferes with host histone deacetylation mediated by HDAC1 and HDAC2, leading to transcription activation. Also plays a role in the inhibition of both antiviral and antiproliferative functions of host interferon alpha. Interaction with host TMEM173/STING impairs the ability of TMEM173/STING to sense cytosolic DNA and promote the production of type I interferon (IFN-alpha and IFN-beta). This Homo sapiens (Human) protein is Protein E7.